We begin with the raw amino-acid sequence, 844 residues long: Translation initiation factor IF-2 (844 aa).

A compositionally biased stretch (basic and acidic residues) spans 1 to 11 (MTEDVKADAPK). 2 disordered regions span residues 1-48 (MTED…VKTD) and 79-249 (RLEA…GTAL). Residues 21 to 30 (TTVSSTTTGG) show a composition bias toward low complexity. Residues 79–161 (RLEAEKAATK…AAEEAKRYAE (83 aa)) show a composition bias toward basic and acidic residues. Positions 162–175 (ADDSDNESSSEDYS) are enriched in acidic residues. The segment covering 200-210 (RGKNKVAKAKK) has biased composition (basic residues). The segment covering 211–237 (GGRDDENSKNSKNERESNRKNQKDAKF) has biased composition (basic and acidic residues). Positions 343–513 (TRAPVVTIMG…LLQSEVLELT (171 aa)) constitute a tr-type G domain. A G1 region spans residues 352 to 359 (GHVDHGKT). GTP is bound at residue 352-359 (GHVDHGKT). A G2 region spans residues 377–381 (GITQH). A G3 region spans residues 399 to 402 (DTPG). GTP-binding positions include 399 to 403 (DTPGH) and 453 to 456 (NKID). A G4 region spans residues 453 to 456 (NKID). Residues 489-491 (SAK) are G5.

Belongs to the TRAFAC class translation factor GTPase superfamily. Classic translation factor GTPase family. IF-2 subfamily.

It localises to the cytoplasm. Its function is as follows. One of the essential components for the initiation of protein synthesis. Protects formylmethionyl-tRNA from spontaneous hydrolysis and promotes its binding to the 30S ribosomal subunits. Also involved in the hydrolysis of GTP during the formation of the 70S ribosomal complex. The sequence is that of Translation initiation factor IF-2 from Haemophilus influenzae (strain 86-028NP).